A 248-amino-acid polypeptide reads, in one-letter code: tRNA (guanine-N(7)-)-methyltransferase (248 aa).

Positions 80, 105, 132, and 155 each coordinate S-adenosyl-L-methionine. Asp155 is an active-site residue. Residues Lys159, Asp191, and 223–226 (TKFE) contribute to the substrate site.

Belongs to the class I-like SAM-binding methyltransferase superfamily. TrmB family.

The catalysed reaction is guanosine(46) in tRNA + S-adenosyl-L-methionine = N(7)-methylguanosine(46) in tRNA + S-adenosyl-L-homocysteine. Its pathway is tRNA modification; N(7)-methylguanine-tRNA biosynthesis. Catalyzes the formation of N(7)-methylguanine at position 46 (m7G46) in tRNA. The sequence is that of tRNA (guanine-N(7)-)-methyltransferase from Nocardioides sp. (strain ATCC BAA-499 / JS614).